We begin with the raw amino-acid sequence, 119 residues long: Microtubule nucleation factor SSNA1 (119 aa).

Thr2 carries the post-translational modification N-acetylthreonine. Positions 2-32 (TQQGAALQNYNNELVKCIEELCQKREELCRQ) are important for localization to the centrosome. A coiled-coil region spans residues 13-70 (NELVKCIEELCQKREELCRQIQQEEDEKQRLQNEVRQLTEKLARVNENLARKIASRNE).

Belongs to the SSNA1 family. As to quaternary structure, self-associates to form fibrils. Also forms dimers as well as monomers. Interacts with SPAST.

The protein resides in the nucleus. The protein localises to the cytoplasm. It is found in the cytoskeleton. Its subcellular location is the microtubule organizing center. It localises to the centrosome. The protein resides in the centriole. The protein localises to the midbody. It is found in the flagellum basal body. Its subcellular location is the flagellum axoneme. It localises to the cell projection. The protein resides in the axon. In terms of biological role, microtubule-binding protein which stabilizes dynamic microtubules by slowing growth and shrinkage at both plus and minus ends and serves as a sensor of microtubule damage, protecting microtubules from the microtubule-severing enzyme SPAST. Induces microtubule branching which is mediated by the formation of long SSNA1 fibrils which guide microtubule protofilaments to split apart from the mother microtubule and form daughter microtubules. Plays a role in axon outgrowth and branching. Required for cell division. The polypeptide is Microtubule nucleation factor SSNA1 (Mus musculus (Mouse)).